We begin with the raw amino-acid sequence, 320 residues long: Mechanosensory protein 3 (320 aa).

LIM zinc-binding domains are found at residues 29–79 and 89–145; these read CNCC…CSQH and CAGC…CMTH. Positions 216–275 form a DNA-binding region, homeobox; the sequence is RRGPRTTIKQNQLDVLNEMFSNTPKPSKHARAKKALETGLSMRVIQVWFQNRRSKERRLK.

It is found in the nucleus. Functionally, specifies differentiation of the set of six touch receptor neurons. Binds cooperatively as a heterodimer with unc-86 to sites in the mec-3 gene promoter. In Caenorhabditis remanei (Caenorhabditis vulgaris), this protein is Mechanosensory protein 3 (mec-3).